The following is a 357-amino-acid chain: tRNA N6-adenosine threonylcarbamoyltransferase (357 aa).

2 residues coordinate Fe cation: histidine 116 and histidine 120. Substrate-binding positions include 139–143, aspartate 172, glycine 185, and asparagine 284; that span reads LVSGG. Aspartate 312 is a Fe cation binding site.

Belongs to the KAE1 / TsaD family. The cofactor is Fe(2+).

Its subcellular location is the cytoplasm. The catalysed reaction is L-threonylcarbamoyladenylate + adenosine(37) in tRNA = N(6)-L-threonylcarbamoyladenosine(37) in tRNA + AMP + H(+). Functionally, required for the formation of a threonylcarbamoyl group on adenosine at position 37 (t(6)A37) in tRNAs that read codons beginning with adenine. Is involved in the transfer of the threonylcarbamoyl moiety of threonylcarbamoyl-AMP (TC-AMP) to the N6 group of A37, together with TsaE and TsaB. TsaD likely plays a direct catalytic role in this reaction. The polypeptide is tRNA N6-adenosine threonylcarbamoyltransferase (Synechococcus sp. (strain CC9902)).